Here is a 136-residue protein sequence, read N- to C-terminus: Large ribosomal subunit protein uL16c (136 aa).

The disordered stretch occupies residues 1–20 (MLSPKRTKFRKQHRGRMKGK).

It belongs to the universal ribosomal protein uL16 family. As to quaternary structure, part of the 50S ribosomal subunit.

The protein localises to the plastid. Its subcellular location is the chloroplast. This chain is Large ribosomal subunit protein uL16c, found in Brachypodium distachyon (Purple false brome).